We begin with the raw amino-acid sequence, 225 residues long: Large ribosomal subunit protein bL25 (225 aa).

The disordered stretch occupies residues 188–225 (EEIEEAEAEAQATDADTATDDSEQTSEEQAEENKEDKE). The span at 204–217 (TATDDSEQTSEEQA) shows a compositional bias: acidic residues.

This sequence belongs to the bacterial ribosomal protein bL25 family. CTC subfamily. In terms of assembly, part of the 50S ribosomal subunit; part of the 5S rRNA/L5/L18/L25 subcomplex. Contacts the 5S rRNA. Binds to the 5S rRNA independently of L5 and L18.

Functionally, this is one of the proteins that binds to the 5S RNA in the ribosome where it forms part of the central protuberance. This Exiguobacterium sibiricum (strain DSM 17290 / CCUG 55495 / CIP 109462 / JCM 13490 / 255-15) protein is Large ribosomal subunit protein bL25.